A 437-amino-acid polypeptide reads, in one-letter code: Eukaryotic peptide chain release factor subunit 1 (437 aa).

This sequence belongs to the eukaryotic release factor 1 family. As to quaternary structure, heterodimer of two subunits, one of which binds GTP.

The protein localises to the cytoplasm. Its function is as follows. Directs the termination of nascent peptide synthesis (translation) in response to the termination codons UAA and possibly also UAG and UGA. This Didinium nasutum protein is Eukaryotic peptide chain release factor subunit 1 (eRF1).